The following is an 885-amino-acid chain: Ankyrin repeat and SAM domain-containing protein 6 (885 aa).

ANK repeat units follow at residues 8-37, 68-97, 101-130, 134-163, 181-210, 215-244, 282-312, 316-345, 350-379, and 383-414; these read PGLQ…EPVA, AGNS…SVNS, YGWS…DVNA, LGAS…TVDH, LGIT…DPNH, VGWS…NPDH, KRRP…HVNL, DGAT…DMNK, HGWT…DVTL, and NGYT…QVNK. N129 bears the 3-hydroxyasparagine mark. 4 disordered regions span residues 415-439, 491-522, 563-775, and 855-885; these read DRGG…SIPM, MRAP…PRRE, SSDR…ITDE, and FESS…SSRR. A compositionally biased stretch (low complexity) spans 608 to 640; the sequence is PSISRSPTSPASSGNFNHSPHSSGGASGVGSMS. The residue at position 650 (S650) is a Phosphoserine. Positions 650–662 are enriched in polar residues; that stretch reads SGGSVDSVLSQIA. 2 stretches are compositionally biased toward low complexity: residues 689 to 713 and 722 to 739; these read GSSP…TSSS and PPSG…TLTP. S734 and S742 each carry phosphoserine. Positions 750–770 are enriched in low complexity; the sequence is SSVSSSSSHRQSKSSGGSSSG. Residues 773 to 836 form the SAM domain; sequence TDEDELTGIL…LAAISELNAG (64 aa). Residues 855–865 show a composition bias toward polar residues; that stretch reads FESSASNTRAP. Residues 876-885 show a composition bias toward basic and acidic residues; sequence RPEETVSSRR.

As to quaternary structure, homooligomer. Interacts with NEK8. Central component of a complex containing at least ANKS6, INVS, NEK8 and NPHP3. ANKS6 may organize complex assembly by linking INVS and NPHP3 to NEK8 and INVS may target the complex to the proximal ciliary axoneme. Interacts (via SAM domain) with BICC1 (via KH domains) in an RNA-dependent manner. Interacts (via SAM domain) with ANKS3 (via SAM domain). Post-translationally, hydroxylated at Asn-129, most probably by HIF1AN. This hydroxylation results in decreased NEK8-binding. In terms of tissue distribution, widely expressed with moderate level in brain, skeletal muscle and testis. Expressed in renal tubules.

It localises to the cell projection. Its subcellular location is the cilium. It is found in the cytoplasm. Its function is as follows. Required for renal function. The protein is Ankyrin repeat and SAM domain-containing protein 6 (Anks6) of Rattus norvegicus (Rat).